The sequence spans 620 residues: Chaperone protein HscA homolog (620 aa).

It belongs to the heat shock protein 70 family.

Chaperone involved in the maturation of iron-sulfur cluster-containing proteins. Has a low intrinsic ATPase activity which is markedly stimulated by HscB. This is Chaperone protein HscA homolog from Shewanella oneidensis (strain ATCC 700550 / JCM 31522 / CIP 106686 / LMG 19005 / NCIMB 14063 / MR-1).